The primary structure comprises 338 residues: D-erythrose-4-phosphate dehydrogenase (338 aa).

12–13 is a binding site for NAD(+); that stretch reads RI. Substrate contacts are provided by residues 154–156, arginine 200, 213–214, and arginine 236; these read SCT and TK. Cysteine 155 functions as the Nucleophile in the catalytic mechanism. Residue asparagine 318 participates in NAD(+) binding.

The protein belongs to the glyceraldehyde-3-phosphate dehydrogenase family. Epd subfamily. In terms of assembly, homotetramer.

The protein localises to the cytoplasm. It carries out the reaction D-erythrose 4-phosphate + NAD(+) + H2O = 4-phospho-D-erythronate + NADH + 2 H(+). It participates in cofactor biosynthesis; pyridoxine 5'-phosphate biosynthesis; pyridoxine 5'-phosphate from D-erythrose 4-phosphate: step 1/5. Its function is as follows. Catalyzes the NAD-dependent conversion of D-erythrose 4-phosphate to 4-phosphoerythronate. The chain is D-erythrose-4-phosphate dehydrogenase from Yersinia enterocolitica serotype O:8 / biotype 1B (strain NCTC 13174 / 8081).